Consider the following 156-residue polypeptide: ATP synthase subunit b 1 (156 aa).

A helical transmembrane segment spans residues 5–27 (FTLISQAMAFAIFIWFTVRFVWP).

The protein belongs to the ATPase B chain family. In terms of assembly, F-type ATPases have 2 components, F(1) - the catalytic core - and F(0) - the membrane proton channel. F(1) has five subunits: alpha(3), beta(3), gamma(1), delta(1), epsilon(1). F(0) has three main subunits: a(1), b(2) and c(10-14). The alpha and beta chains form an alternating ring which encloses part of the gamma chain. F(1) is attached to F(0) by a central stalk formed by the gamma and epsilon chains, while a peripheral stalk is formed by the delta and b chains.

Its subcellular location is the cell inner membrane. In terms of biological role, f(1)F(0) ATP synthase produces ATP from ADP in the presence of a proton or sodium gradient. F-type ATPases consist of two structural domains, F(1) containing the extramembraneous catalytic core and F(0) containing the membrane proton channel, linked together by a central stalk and a peripheral stalk. During catalysis, ATP synthesis in the catalytic domain of F(1) is coupled via a rotary mechanism of the central stalk subunits to proton translocation. Its function is as follows. Component of the F(0) channel, it forms part of the peripheral stalk, linking F(1) to F(0). This is ATP synthase subunit b 1 from Nitrosospira multiformis (strain ATCC 25196 / NCIMB 11849 / C 71).